A 469-amino-acid polypeptide reads, in one-letter code: Small ribosomal subunit protein mS29 (469 aa).

Leu-150 is an ATP binding site.

The protein belongs to the mitochondrion-specific ribosomal protein mS29 family. Component of the mitochondrial small ribosomal subunit (mt-SSU). Mature N.crassa 74S mitochondrial ribosomes consist of a small (37S) and a large (54S) subunit. The 37S small subunit contains a 16S ribosomal RNA (16S mt-rRNA) and 32 different proteins. The 54S large subunit contains a 23S rRNA (23S mt-rRNA) and 42 different proteins.

Its subcellular location is the mitochondrion. Its function is as follows. Component of the mitochondrial ribosome (mitoribosome), a dedicated translation machinery responsible for the synthesis of mitochondrial genome-encoded proteins, including at least some of the essential transmembrane subunits of the mitochondrial respiratory chain. The mitoribosomes are attached to the mitochondrial inner membrane and translation products are cotranslationally integrated into the membrane. The chain is Small ribosomal subunit protein mS29 (rsm23) from Neurospora crassa (strain ATCC 24698 / 74-OR23-1A / CBS 708.71 / DSM 1257 / FGSC 987).